Consider the following 215-residue polypeptide: Interleukin-12 subunit alpha (215 aa).

A signal peptide spans 1 to 22 (MCQSRYLLFLATLALLNHLSLA). Cystine bridges form between cysteine 33/cysteine 106, cysteine 60/cysteine 192, and cysteine 81/cysteine 119. Asparagine 89 carries N-linked (GlcNAc...) asparagine glycosylation.

The protein belongs to the IL-6 superfamily. Heterodimer with IL12B; disulfide-linked. This heterodimer is known as interleukin IL-12. Heterodimer with EBI3/IL27B; not disulfide-linked. This heterodimer is known as interleukin IL-35. Interacts with NBR1; this interaction promotes IL-12 secretion.

Its subcellular location is the secreted. Heterodimerizes with IL12B to form the IL-12 cytokine or with EBI3/IL27B to form the IL-35 cytokine. IL-12 is primarily produced by professional antigen-presenting cells (APCs) such as B-cells and dendritic cells (DCs) as well as macrophages and granulocytes and regulates T-cell and natural killer-cell responses, induces the production of interferon-gamma (IFN-gamma), favors the differentiation of T-helper 1 (Th1) cells and is an important link between innate resistance and adaptive immunity. Mechanistically, exerts its biological effects through a receptor composed of IL12R1 and IL12R2 subunits. Binding to the receptor results in the rapid tyrosine phosphorylation of a number of cellular substrates including the JAK family kinases TYK2 and JAK2. In turn, recruited STAT4 gets phosphorylated and translocates to the nucleus where it regulates cytokine/growth factor responsive genes. As part of IL-35, plays essential roles in maintaining the immune homeostasis of the liver microenvironment and also functions as an immune-suppressive cytokine. Mediates biological events through unconventional receptors composed of IL12RB2 and gp130/IL6ST heterodimers or homodimers. Signaling requires the transcription factors STAT1 and STAT4, which form a unique heterodimer that binds to distinct DNA sites. This chain is Interleukin-12 subunit alpha (Il12a), found in Mus musculus (Mouse).